The chain runs to 211 residues: Superoxide dismutase [Mn], mitochondrial (211 aa).

The transit peptide at 1–24 (MLCRAVCSASRRLAPALGILGVRQ) directs the protein to the mitochondrion. Residue histidine 50 participates in Mn(2+) binding. Tyrosine 58 bears the 3'-nitrotyrosine mark. N6-acetyllysine; alternate is present on residues lysine 68 and lysine 75. An N6-succinyllysine; alternate mark is found at lysine 68 and lysine 75. Histidine 98 lines the Mn(2+) pocket. The residue at position 114 (lysine 114) is an N6-acetyllysine. An N6-acetyllysine; alternate mark is found at lysine 122 and lysine 130. N6-succinyllysine; alternate is present on residues lysine 122 and lysine 130. Residues aspartate 183 and histidine 187 each coordinate Mn(2+). Lysine 202 carries the N6-acetyllysine modification.

The protein belongs to the iron/manganese superoxide dismutase family. Homotetramer. Mn(2+) serves as cofactor. In terms of processing, nitrated under oxidative stress. Nitration coupled with oxidation inhibits the catalytic activity. Post-translationally, acetylation at Lys-122 decreases enzymatic activity. Deacetylated by SIRT3 upon exposure to ionizing radiations or after long fasting. Polyubiquitinated; leading to proteasomal degradation. Deubiquitinated by USP36 which increases protein stability.

The protein resides in the mitochondrion matrix. It carries out the reaction 2 superoxide + 2 H(+) = H2O2 + O2. Destroys superoxide anion radicals which are normally produced within the cells and which are toxic to biological systems. The polypeptide is Superoxide dismutase [Mn], mitochondrial (SOD2) (Cavia porcellus (Guinea pig)).